The sequence spans 303 residues: Glutamyl-Q tRNA(Asp) synthetase (303 aa).

L-glutamate is bound by residues 16-20 (RFAPS) and glutamate 52. Positions 19 to 29 (PSPSGPLHFGS) match the 'HIGH' region motif. The Zn(2+) site is built by cysteine 108, cysteine 110, tyrosine 122, and cysteine 126. 2 residues coordinate L-glutamate: tyrosine 177 and arginine 195. Residues 233-237 (KLSKQ) carry the 'KMSKS' region motif. Residue lysine 236 participates in ATP binding.

This sequence belongs to the class-I aminoacyl-tRNA synthetase family. GluQ subfamily. It depends on Zn(2+) as a cofactor.

Functionally, catalyzes the tRNA-independent activation of glutamate in presence of ATP and the subsequent transfer of glutamate onto a tRNA(Asp). Glutamate is transferred on the 2-amino-5-(4,5-dihydroxy-2-cyclopenten-1-yl) moiety of the queuosine in the wobble position of the QUC anticodon. The chain is Glutamyl-Q tRNA(Asp) synthetase from Vibrio vulnificus (strain YJ016).